A 536-amino-acid chain; its full sequence is Caspase recruitment domain-containing protein 9 (536 aa).

Serine 2 bears the Phosphoserine mark. Residues aspartate 3, cysteine 10, and histidine 73 each contribute to the Zn(2+) site. A CARD domain is found at 6 to 98; it reads NDDECWSALE…QLYRKVTGKE (93 aa). The interval 99–116 is linker; the sequence is PARVFSMIIDASGESGLT. Coiled-coil stretches lie at residues 117–277 and 303–420; these read QLLM…HRNS and SLRK…QLDM. Lysine 125 participates in a covalent cross-link: Glycyl lysine isopeptide (Lys-Gly) (interchain with G-Cter in ubiquitin). Threonine 231 carries the post-translational modification Phosphothreonine. Serine 277 is subject to Phosphoserine. Residues serine 424, serine 425, serine 431, serine 451, serine 461, serine 483, and serine 498 each carry the phosphoserine modification. The interval 425–451 is disordered; the sequence is SDLEDSSPRNSQELSLPQDLEEDAQLS. The interval 472–536 is disordered; the sequence is KHLSQTHDTV…GSDNTDTEGS (65 aa). Residues 487–502 show a composition bias toward basic and acidic residues; it reads PPEKERRRLKESFENY. Threonine 531 and threonine 533 each carry phosphothreonine; by CK2.

Monomer. Homodimer; homodimerization is mediated by the CARD domain which forms an extensive interaction with the adjacent linker and coiled-coil regions; leads to an autoinhibited state. Homomultimer; polymerizes following activation, forming a nucleating helical template that seeds BCL10-filament formation via a CARD-CARD interaction. Interacts (via CARD domain) with BCL10 (via CARD domain); interaction takes place following CARD9 activation and polymerization, leading to the formation of a filamentous CBM complex assembly. Component of a CBM complex (CARD9-BCL10, MALT1), composed of CARD9, BCL10 and MALT1. Interacts with RASGRF1. Interacts with NOD2 (via NACHT domain); interaction is direct. Interacts with RIPK2. Interacts with VHL; without leading to protein degradation. Post-translationally, phosphorylated at Thr-231 by PRKCD downstream of C-type lectin receptors activation: phosphorylation promotes interaction with BCL10, followed by activation of NF-kappa-B and MAP kinase p38 pathways. Phosphorylated at Thr-531 and Thr-533 by CK2 following interaction with VHL, leading to inhibit the ability to activate NF-kappa-B. Ubiquitinated at Lys-125 via 'Lys-27'-linked ubiquitin by TRIM62 downstream of C-type lectin receptors activation; leading to CARD9 activation, followed by activation of NF-kappa-B and MAP kinase p38 pathways. Deubiquitinated at Lys-125 by USP15, inhibiting CARD9.

It is found in the cytoplasm. With respect to regulation, maintained in an autoinhibited state via homodimerization in which the CARD domain forms an extensive interaction with the adjacent linker and coiled-coil regions. Activation downstream of C-type lectin receptors, by phosphorylation by PRKCD and/or ubiquitination by TRIM62, triggers disruption of the CARD domain-coiled coil interface, CARD9 homooligomerization and BCL10 recruitment, followed by activation of NF-kappa-B and MAP kinase p38 pathways. Zinc-binding inhibits activation by stabilizing the CARD ground-state conformation and restricting its capacity to form BCL10-nucleating filaments. Its function is as follows. Adapter protein that plays a key role in innate immune response against fungi by forming signaling complexes downstream of C-type lectin receptors. CARD9-mediated signals are essential for antifungal immunity against a subset of fungi from the phylum Ascomycota. Transduces signals in myeloid cells downstream of C-type lectin receptors CLEC7A (dectin-1), CLEC6A (dectin-2) and CLEC4E (Mincle), which detect pathogen-associated molecular pattern metabolites (PAMPs), such as fungal carbohydrates, and trigger CARD9 activation. Upon activation, CARD9 homooligomerizes to form a nucleating helical template that recruits BCL10 via CARD-CARD interaction, thereby promoting polymerization of BCL10 and subsequent recruitment of MALT1: this leads to activation of NF-kappa-B and MAP kinase p38 (MAPK11, MAPK12, MAPK13 and/or MAPK14) pathways which stimulate expression of genes encoding pro-inflammatory cytokines and chemokines. CARD9 signaling in antigen-presenting cells links innate sensing of fungi to the activation of adaptive immunity and provides a cytokine milieu that induces the development and subsequent of interleukin 17-producing T helper (Th17) cells. Also involved in activation of myeloid cells via classical ITAM-associated receptors and TLR: required for TLR-mediated activation of MAPK, while it is not required for TLR-induced activation of NF-kappa-B. CARD9 can also be engaged independently of BCL10: forms a complex with RASGRF1 downstream of C-type lectin receptors, which recruits and activates HRAS, leading to ERK activation and the production of cytokines. Acts as an important regulator of the intestinal commensal fungi (mycobiota) component of the gut microbiota. Plays an essential role in antifungal immunity against dissemination of gut fungi: acts by promoting induction of antifungal IgG antibodies response in CX3CR1(+) macrophages to confer protection against disseminated C.albicans or C.auris infection. Also mediates immunity against other pathogens, such as certain bacteria, viruses and parasites; CARD9 signaling is however redundant with other innate immune responses. In response to L.monocytogenes infection, required for the production of inflammatory cytokines activated by intracellular peptidoglycan: acts by connecting NOD2 recognition of peptidoglycan to downstream activation of MAP kinases (MAPK) without activating NF-kappa-B. This is Caspase recruitment domain-containing protein 9 from Rattus norvegicus (Rat).